The sequence spans 1499 residues: MPKYVEGVELTQEGMHAIFARMGYGDITSGSIYNGVPTIDTGALNRQGFMPVLTGVGPHRDSGHWIMLIKGPGNQYYLFDPLGKTSGEGYQNILAAQLPMGSTLSVIPNGSGLNMGLCGYWVASAGLRAHQALNQHNPPTLLNVGQTITNEMRNELDHDGYRKITGWLRAVADEFPEGDPQLDGKALRENTEKDLKIEIPTLVLPGKDTSPKEMSVKPTAPQDKSVPVWNGFSLYTDDTVKAAAQYAYDNYLGKPYTGSVESAPANFGGRMVYRQHHGLSHTLRTMAYAELIVEEARKAKLRGETLGKFKDGRTIADVTPQELKKIMIAQAFFVAGRDDEASDAKNYQKYHEQSRDAFLKYVKDNESTLIPDVFKDQEDVNFYARVIEDKSHDWESTPAHVLINQGHMVDLVRVKQPPESFLQRYFSSMQRWIGSQATEAVFGIQRQFFHATYEVVAGFDSDNKEPHLVVSGLGRYVIGEDGQPIREAPKKGQKEGDLKVFPQTYKLKENERLMRVDEFLKLPEIQNTFPGSGKHLQGGMPGMNEMDYWNRLNSLNRARCENDVDFCLKQLQTAHDKAKIEPIKQAFQSSKGKERRQPNVDEIAAARIIQQILANPDCIHDDHVLINGQKLEQQFFRDLLAKCEMAVVGSLLNDTDIGNIDTLMRHEKDTEFHSTNPEAVPVKIGEYWINDQRINNSSGNITQKKHDLIFLMQNDAWYFSRVNAIAQNRDKGSTFKEVLITTLMTPLTSKALVDTSQAKPPTRLFRGLNLSEEFTKGLIDQANAMIANTTERLFTDHSPEAFKQIKLNDLSKMSGRTNASTTTEIKLVKETWDSNVIFEMLDPDGLLHSKQVGRHGEGTESEFSVYLPEDVALVPVKVTLDGKTQKGENRYVFTFVAVKSPDFTPRHESGYAVEPFLRMQAAKLAEVKSSIEKAQRAPDLETIFNLQNEVEAVQYSHLSTGYKNFLKNTVGPVLENSLSGLMESDTDTLSKALAAFPSDTQWSAFNFEEARQAKRQMDAIKQMVGNKVVLDALTQCQDALEKQNIAGALDALKKIPSEKEMGTIRRELREQIQSARQELESLQRAVVTPVVTDEKKVRERYDALIENTSKKITELETGKLPNLDAVKKGISNLSNLKQEVTVLRNEKIRMHVGTDKVDFSDVEKLEQQIQVIDTKLADAYLLEVTKQISALDNTKPKNQTELKTKIAAFLDRTTDIEMLRNERIKKHGSSKDPLDLSDLDKLSGSLQRINQSLVSDLITTIRVSINQMEAKTFHEQEKEIQQNFELLAKLEKTLDKSKTSEKLREDIPKLNDLLVAKQKAYPQMVQMQLKSEVFVTQLREVCQANHDDLDKTRNARLRELDRLDREAGITRMVGNLIWGLTNKVGLTTDERLDIRTKQQSLARFKNELFNDKIDTDQLISNLARKRPSELQEGLGISTDNAMELHLLLTELAGKTTSPDELEERMKAIDDISTKIGREPEHLKFVMVEEDESNKKTIGF.

The tract at residues 1–193 (MPKYVEGVEL…GKALRENTEK (193 aa)) is deubiquitinase. Active-site for deubiquitinase activity residues include His64 and Asp80. The Nucleophile; for deubiquitinase activity role is filled by Cys118. Residues 760 to 1000 (PPTRLFRGLN…KALAAFPSDT (241 aa)) form a mono-ADP-ribosyltransferase region. 766 to 772 (RGLNLSE) contributes to the NAD(+) binding site. Position 860 is a 5-glutamyl glutamate (Glu860). NAD(+) is bound at residue Glu862. Positions 1059–1181 (KEMGTIRREL…IDTKLADAYL (123 aa)) form a coiled coil.

It belongs to the SidE family. As to quaternary structure, interacts with IcmS. Post-translationally, is able to ubiquitinate itself, but this modification is not required to ubiquitinate Rab33b. Glutamylated at Glu-860 by SidJ; glutamylation inhibits SdeA activity to catalyze the production of ADP-ribosylated ubiquitin.

Its subcellular location is the secreted. It is found in the host cell. The catalysed reaction is L-arginyl-[protein] + NAD(+) = N(omega)-(ADP-D-ribosyl)-L-arginyl-[protein] + nicotinamide + H(+). Ubiquitination catalyzed by SdeA is insensitive to the cysteine alkylation agent maleimide, suggesting that a cysteine conjugation of ubiquitin does not form during the reaction. Its function is as follows. Secreted effector that interferes with the host cell ubiquitin pathway and is required for intracellular bacterial replication. Catalyzes the ubiquitination of several mammalian Rab proteins (Rab33b, Rab1, Rab6a and Rab30) during L.pneumophila infection, without engaging the standard cellular enzyme cascade (E1 and E2). Transfers an ADP-ribose moiety from NAD to the 'Arg-42' residue of ubiquitin in a reaction that releases nicotinamide. The modified ubiquitin is subsequently transferred to serine residues of the substrate protein via a phosphoribose linker that results in the release of AMP. Cannot ubiquitinate the endosomal Rab5 or the cytoskeletal small GTPase Rac1. Also acts as a deubiquitinase (DUB), catalyzing the cleavage of three of the most abundant polyubiquitin chains ('Lys-11', 'Lys-48' and 'Lys-63') with a distinct preference for 'Lys-63' linkages; is thus able to efficiently remove 'Lys-63'-linked polyubiquitin chains from the phagosomal surface. Is also able to remove NEDD8 from neddylated proteins, but is unable to recognize SUMO. The DUB activity of SdeA is important for regulating the dynamics of ubiquitin association with the bacterial phagosome, but is dispensable for its role in intracellular bacterial replication. This is Ubiquitinating/deubiquitinating enzyme SdeA from Legionella pneumophila subsp. pneumophila (strain Philadelphia 1 / ATCC 33152 / DSM 7513).